The chain runs to 374 residues: Layilin (374 aa).

The signal sequence occupies residues 1 to 24 (MQPGPALQAVLLAVLLSEPRSSKG). Topologically, residues 25 to 221 (RLLSGQLVCR…TKETFKESRE (197 aa)) are extracellular. One can recognise a C-type lectin domain in the interval 37–177 (TRRPCYKVIY…CNMKNNFICK (141 aa)). Cystine bridges form between cysteine 63–cysteine 176 and cysteine 142–cysteine 168. N-linked (GlcNAc...) asparagine glycosylation occurs at asparagine 109. The segment at 184 to 212 (STTPSIRPGGEATEPPTPVLPEETQKEDT) is disordered. Residues 222–242 (AALNLAYILIPSIPLFLLLVV) form a helical membrane-spanning segment. At 243–374 (TSAACWVWIC…SGWVENEIYY (132 aa)) the chain is on the cytoplasmic side. A phosphoserine mark is found at serine 279 and serine 292. An interaction with NF2 region spans residues 323-367 (DYDNMAVNPSESGFVTLASMESGFVTNDIYEFSPDRMGRSKESGW). The interval 330–374 (NPSESGFVTLASMESGFVTNDIYEFSPDRMGRSKESGWVENEIYY) is interaction with TLN1. 5 tandem repeats follow at residues 333 to 337 (ESGFV), 343 to 347 (ESGFV), 349 to 352 (NDIY), 364 to 368 (ESGWV), and 370 to 373 (NEIY). The interval 333 to 368 (ESGFVTLASMESGFVTNDIYEFSPDRMGRSKESGWV) is 3 X 5 AA repeats of E-S-G-X-V. The interval 349–373 (NDIYEFSPDRMGRSKESGWVENEIY) is 2 X 4 AA repeats of N-X-I-Y.

As to quaternary structure, interacts with NF2 and RDX. Interacts with TLN1. Widely expressed. Abundant in the ovary.

It is found in the membrane. Functionally, receptor for hyaluronate. This Cricetulus griseus (Chinese hamster) protein is Layilin (LAYN).